Reading from the N-terminus, the 300-residue chain is Cation-efflux pump FieF (300 aa).

The next 4 helical transmembrane spans lie at 12-32 (AALS…FAWW), 40-60 (LAAL…LFVV), 82-102 (AALA…LTGF), and 114-134 (PGLG…LVTF). D45 and D49 together coordinate Zn(2+). Positions 153 and 157 each coordinate Zn(2+). A helical transmembrane segment spans residues 164 to 184 (ILIALALSWYGFHRADALFAL).

This sequence belongs to the cation diffusion facilitator (CDF) transporter (TC 2.A.4) family. FieF subfamily. As to quaternary structure, homodimer.

The protein resides in the cell inner membrane. It catalyses the reaction Zn(2+)(in) + H(+)(out) = Zn(2+)(out) + H(+)(in). It carries out the reaction Cd(2+)(in) + H(+)(out) = Cd(2+)(out) + H(+)(in). The enzyme catalyses Fe(2+)(in) + H(+)(out) = Fe(2+)(out) + H(+)(in). In terms of biological role, divalent metal cation transporter which exports Zn(2+), Cd(2+) and possibly Fe(2+). May be involved in zinc and iron detoxification by efflux. The polypeptide is Cation-efflux pump FieF (Yersinia enterocolitica serotype O:8 / biotype 1B (strain NCTC 13174 / 8081)).